Reading from the N-terminus, the 296-residue chain is GTP-binding protein GEM (296 aa).

2 disordered regions span residues 1–20 (MTLNNVTMRQGTVGMQPQQQ) and 37–68 (PHQYSHRNRHSATPEDHCRRSWSSDSTDSVIS). The span at 57–68 (SWSSDSTDSVIS) shows a compositional bias: low complexity. GTP is bound by residues 82 to 89 (GEQGVGKS) and 191 to 194 (NKSD). A calmodulin-binding region spans residues 266-285 (ARRFWGKIVAKNNKNMAFKL).

It belongs to the small GTPase superfamily. RGK family. In terms of assembly, interacts with calmodulin in a Ca(2+)-dependent manner. Binds ROCK1. Phosphorylated on tyrosine residues. Most abundant in thymus, spleen, kidney, lung, and testis. Less abundant in heart, brain, liver and skeletal muscle.

The protein resides in the cell membrane. In terms of biological role, could be a regulatory protein, possibly participating in receptor-mediated signal transduction at the plasma membrane. Has guanine nucleotide-binding activity but undetectable intrinsic GTPase activity. This Homo sapiens (Human) protein is GTP-binding protein GEM (GEM).